We begin with the raw amino-acid sequence, 852 residues long: DNA mismatch repair protein MutS (852 aa).

602–609 (GPNMSGKS) serves as a coordination point for ATP.

This sequence belongs to the DNA mismatch repair MutS family.

This protein is involved in the repair of mismatches in DNA. It is possible that it carries out the mismatch recognition step. This protein has a weak ATPase activity. The chain is DNA mismatch repair protein MutS from Streptococcus thermophilus (strain ATCC BAA-491 / LMD-9).